The chain runs to 119 residues: Ribonuclease P protein component (119 aa).

It belongs to the RnpA family. As to quaternary structure, consists of a catalytic RNA component (M1 or rnpB) and a protein subunit.

It catalyses the reaction Endonucleolytic cleavage of RNA, removing 5'-extranucleotides from tRNA precursor.. RNaseP catalyzes the removal of the 5'-leader sequence from pre-tRNA to produce the mature 5'-terminus. It can also cleave other RNA substrates such as 4.5S RNA. The protein component plays an auxiliary but essential role in vivo by binding to the 5'-leader sequence and broadening the substrate specificity of the ribozyme. The sequence is that of Ribonuclease P protein component from Chlamydia muridarum (strain MoPn / Nigg).